The chain runs to 326 residues: MNQKKDEKVINQAVKMLTISEDEAGQRIDNYLLAKLKGVPKSLIYRILRKGEVRVNKGRIKPEYKLQANDIVRVPPVRVSEKEHAPISTKLNKVSQLEKQILFEDECLLVLNKPSGIAVHGGSGLSFGVIEALRTLRPDARFLELVHRLDRDTSGILLVAKKRSALRSLHEQLREKTVQKDYLALVRGQWQSHCKVVKAPLLKNELSSGERIVRVSEQGKPSETRFSIEERYEYATLVKASPVTGRTHQIRVHTQYAGHPIALDDKYGDKHFDEQMTQLGLTRLFLHAFSIRFEHPKTGETLRINAPLDPEMKKILGALREQKSSN.

Positions 26 to 98 (QRIDNYLLAK…TKLNKVSQLE (73 aa)) constitute an S4 RNA-binding domain. Asp150 is a catalytic residue.

Belongs to the pseudouridine synthase RluA family.

The enzyme catalyses uridine(955/2504/2580) in 23S rRNA = pseudouridine(955/2504/2580) in 23S rRNA. In terms of biological role, responsible for synthesis of pseudouridine from uracil at positions 955, 2504 and 2580 in 23S ribosomal RNA. The protein is Ribosomal large subunit pseudouridine synthase C (rluC) of Pasteurella multocida (strain Pm70).